A 509-amino-acid chain; its full sequence is 2,3-bisphosphoglycerate-independent phosphoglycerate mutase (509 aa).

Asp-12 and Ser-62 together coordinate Mn(2+). Residue Ser-62 is the Phosphoserine intermediate of the active site. Residues His-123, Arg-153–Asp-154, Arg-185, Arg-191, Arg-260–Arg-263, and Lys-333 contribute to the substrate site. Residues Asp-400, His-404, Asp-441, His-442, and His-460 each coordinate Mn(2+).

It belongs to the BPG-independent phosphoglycerate mutase family. As to quaternary structure, monomer. Mn(2+) is required as a cofactor.

The enzyme catalyses (2R)-2-phosphoglycerate = (2R)-3-phosphoglycerate. It participates in carbohydrate degradation; glycolysis; pyruvate from D-glyceraldehyde 3-phosphate: step 3/5. Functionally, catalyzes the interconversion of 2-phosphoglycerate and 3-phosphoglycerate. This Clostridium kluyveri (strain ATCC 8527 / DSM 555 / NBRC 12016 / NCIMB 10680 / K1) protein is 2,3-bisphosphoglycerate-independent phosphoglycerate mutase.